The sequence spans 179 residues: UPF0398 protein SSU05_0416 (179 aa).

It belongs to the UPF0398 family.

The sequence is that of UPF0398 protein SSU05_0416 from Streptococcus suis (strain 05ZYH33).